A 284-amino-acid polypeptide reads, in one-letter code: MDGIKKKMIAMKLEKENAMERAVQYEELLKKKEEEREKRESEIAELNTKMKQAQIDCDEVQETLQEQMNKLEETDKRATNAEAEVAAMTRRIRLLEEDLEVSSSRLTETLTKLEEASKTAEESERGRKDLEIRSIADDERLNQLEDQQKEAKYIAEDADRKYDEAARKLAIAEVDFKRAEARLEAAESKIVELEEELRVIGNNMKALEISEQESAQREESYEETIRDLTERLKAAEQRATEAERQVSKLQNEVDHLEDDLLAEKERYKALSGELDQTFAELTGY.

Residues 1–284 (MDGIKKKMIA…DQTFAELTGY (284 aa)) adopt a coiled-coil conformation. Residues 111–131 (TKLEEASKTAEESERGRKDLE) form a disordered region.

It belongs to the tropomyosin family. As to quaternary structure, homodimer.

Tropomyosin, in association with the troponin complex, plays a central role in the calcium dependent regulation of muscle contraction. The polypeptide is Tropomyosin (Schistosoma haematobium (Blood fluke)).